The chain runs to 493 residues: Cysteine--tRNA ligase (493 aa).

Residue Cys31 participates in Zn(2+) binding. The short motif at 33 to 43 (PTVYGDAHLGH) is the 'HIGH' region element. Zn(2+) contacts are provided by Cys226, His251, and Glu255. The short motif at 283–287 (KMGKS) is the 'KMSKS' region element. Residue Lys286 coordinates ATP.

The protein belongs to the class-I aminoacyl-tRNA synthetase family. In terms of assembly, monomer. Zn(2+) serves as cofactor.

It localises to the cytoplasm. The catalysed reaction is tRNA(Cys) + L-cysteine + ATP = L-cysteinyl-tRNA(Cys) + AMP + diphosphate. This chain is Cysteine--tRNA ligase, found in Phocaeicola vulgatus (strain ATCC 8482 / DSM 1447 / JCM 5826 / CCUG 4940 / NBRC 14291 / NCTC 11154) (Bacteroides vulgatus).